We begin with the raw amino-acid sequence, 329 residues long: NAC domain-containing protein 79 (329 aa).

Positions 17–167 (LPPGFRFHPT…EWVICRVFHK (151 aa)) constitute an NAC domain. A DNA-binding region spans residues 114-173 (VGMKKTLVFYRGRAPKGQKTNWVMHEYRLDGKLSAHNLPKTAKNEWVICRVFHKTAGGKK).

As to expression, expressed at low levels in leaves.

It localises to the nucleus. The polypeptide is NAC domain-containing protein 79 (Arabidopsis thaliana (Mouse-ear cress)).